The sequence spans 142 residues: MLMPKRVKYRKQHRGRTKGDAKGGALVMFGEYGLKALEPAWITAQQIEACRLAITRTLKKEGKLWIKIFPDKSYTKHPPETKLGKGKGNVEGWVAVVKPGKVMFEIGGVEEELAIKALEYAATKLPIKTKIVTRHHIGGEAV.

This sequence belongs to the universal ribosomal protein uL16 family. In terms of assembly, part of the 50S ribosomal subunit.

Functionally, binds 23S rRNA and is also seen to make contacts with the A and possibly P site tRNAs. The sequence is that of Large ribosomal subunit protein uL16 from Fervidobacterium nodosum (strain ATCC 35602 / DSM 5306 / Rt17-B1).